An 82-amino-acid chain; its full sequence is Ubiquinol-cytochrome-c reductase complex assembly factor 3 (82 aa).

Residues 1–6 (METVRR) lie on the Mitochondrial matrix side of the membrane. A helical transmembrane segment spans residues 7-29 (IVKGTLLLGFCTGIGGDLWVLVA). Residues 30 to 82 (PGQERRLEMRMNYPEANPPMLAEAHKRNEMVLKVIEESAKTNENMARRSPWSS) lie on the Mitochondrial intermembrane side of the membrane.

Belongs to the UQCC3 family. Associates with the ubiquinol-cytochrome c reductase complex (mitochondrial respiratory chain complex III or cytochrome b-c1 complex).

It is found in the mitochondrion inner membrane. Functionally, required for the assembly of the ubiquinol-cytochrome c reductase complex (mitochondrial respiratory chain complex III or cytochrome b-c1 complex), mediating cytochrome b recruitment and probably stabilization within the complex. Thereby, plays an important role in ATP production by mitochondria. Cardiolipin-binding protein, it may also control the cardiolipin composition of mitochondria membranes and their morphology. The protein is Ubiquinol-cytochrome-c reductase complex assembly factor 3 of Xenopus laevis (African clawed frog).